The following is a 132-amino-acid chain: Small ribosomal subunit protein uS11 (132 aa).

Belongs to the universal ribosomal protein uS11 family. As to quaternary structure, part of the 30S ribosomal subunit. Interacts with proteins S7 and S18. Binds to IF-3.

Its function is as follows. Located on the platform of the 30S subunit, it bridges several disparate RNA helices of the 16S rRNA. Forms part of the Shine-Dalgarno cleft in the 70S ribosome. The sequence is that of Small ribosomal subunit protein uS11 from Bifidobacterium animalis subsp. lactis (strain AD011).